Reading from the N-terminus, the 619-residue chain is Chaperone protein HscA homolog (619 aa).

It belongs to the heat shock protein 70 family.

In terms of biological role, chaperone involved in the maturation of iron-sulfur cluster-containing proteins. Has a low intrinsic ATPase activity which is markedly stimulated by HscB. The chain is Chaperone protein HscA homolog from Shewanella denitrificans (strain OS217 / ATCC BAA-1090 / DSM 15013).